Consider the following 213-residue polypeptide: uncharacterized protein (213 aa).

Residues 1-14 (MSSDVLVTTPAQRQ) are compositionally biased toward polar residues. Positions 1–26 (MSSDVLVTTPAQRQTEPHAEAVSRNR) are disordered. Residues 29–89 (QATFRKVLAA…EVYLDLVRQV (61 aa)) enclose the HTH tetR-type domain.

This is an uncharacterized protein from Mycobacterium tuberculosis (strain CDC 1551 / Oshkosh).